We begin with the raw amino-acid sequence, 222 residues long: Cytochrome b6 (222 aa).

The chain crosses the membrane as a helical span at residues 39–59; sequence IFYCLGGITLVCFIIQFATGF. C42 provides a ligand contact to heme c. Heme b is bound by residues H93 and H107. 3 helical membrane passes run 97-117, 123-143, and 193-213; these read ASMM…TGGF, LTWI…VTGY, and LHTF…FLMI. The heme b site is built by H194 and H209.

The protein belongs to the cytochrome b family. PetB subfamily. In terms of assembly, the 4 large subunits of the cytochrome b6-f complex are cytochrome b6, subunit IV (17 kDa polypeptide, PetD), cytochrome f and the Rieske protein, while the 4 small subunits are PetG, PetL, PetM and PetN. The complex functions as a dimer. The cofactor is heme b. It depends on heme c as a cofactor.

The protein resides in the cellular thylakoid membrane. Functionally, component of the cytochrome b6-f complex, which mediates electron transfer between photosystem II (PSII) and photosystem I (PSI), cyclic electron flow around PSI, and state transitions. The protein is Cytochrome b6 of Prochlorothrix hollandica.